Consider the following 298-residue polypeptide: Apolipoprotein E (298 aa).

Positions 1-18 (MKILWAALVLTLLAGCRA) are cleaved as a signal peptide. Tandem repeats lie at residues 74–95 (LLME…KEVG), 96–117 (PMAE…ARLA), 118–139 (GDME…AMLG), 140–161 (QSSE…KRLQ), 162–183 (RDAE…EGAE), and 223–244 (GRLE…EQME). Residues 74-244 (LLMEDTMKEL…RLEEVREQME (171 aa)) are 8 X 22 AA approximate tandem repeats. Methionine sulfoxide is present on methionine 137. Phosphoserine is present on serine 141. The segment at 152 to 162 (HLRKLRKRLQR) is LDL and other lipoprotein receptors binding. 156 to 159 (LRKR) contacts heparin. The tract at residues 204–272 (ALTSHPLRER…SWFEPMVEDL (69 aa)) is lipid-binding and lipoprotein association. 218–225 (GEQVRGRL) serves as a coordination point for heparin. The interval 260–272 (RLKSWFEPMVEDL) is specificity for association with VLDL.

This sequence belongs to the apolipoprotein A1/A4/E family. In terms of assembly, homotetramer. May interact with ABCA1; functionally associated with ABCA1 in the biogenesis of HDLs. May interact with APP/A4 amyloid-beta peptide; the interaction is extremely stable in vitro but its physiological significance is unclear. May interact with MAPT. May interact with MAP2. In the cerebrospinal fluid, interacts with secreted SORL1. Interacts with PMEL; this allows the loading of PMEL luminal fragment on ILVs to induce fibril nucleation. APOE exists as multiple glycosylated and sialylated glycoforms within cells and in plasma. The extent of glycosylation and sialylation are tissue and context specific. Post-translationally, glycated in plasma VLDL. In terms of processing, phosphorylated by FAM20C in the extracellular medium.

Its subcellular location is the secreted. It localises to the extracellular space. The protein resides in the extracellular matrix. The protein localises to the extracellular vesicle. It is found in the endosome. Its subcellular location is the multivesicular body. Functionally, APOE is an apolipoprotein, a protein associating with lipid particles, that mainly functions in lipoprotein-mediated lipid transport between organs via the plasma and interstitial fluids. APOE is a core component of plasma lipoproteins and is involved in their production, conversion and clearance. Apolipoproteins are amphipathic molecules that interact both with lipids of the lipoprotein particle core and the aqueous environment of the plasma. As such, APOE associates with chylomicrons, chylomicron remnants, very low density lipoproteins (VLDL) and intermediate density lipoproteins (IDL) but shows a preferential binding to high-density lipoproteins (HDL). It also binds a wide range of cellular receptors including the LDL receptor/LDLR, the LDL receptor-related proteins LRP1, LRP2 and LRP8 and the very low-density lipoprotein receptor/VLDLR that mediate the cellular uptake of the APOE-containing lipoprotein particles. Finally, APOE also has a heparin-binding activity and binds heparan-sulfate proteoglycans on the surface of cells, a property that supports the capture and the receptor-mediated uptake of APOE-containing lipoproteins by cells. A main function of APOE is to mediate lipoprotein clearance through the uptake of chylomicrons, VLDLs, and HDLs by hepatocytes. APOE is also involved in the biosynthesis by the liver of VLDLs as well as their uptake by peripheral tissues ensuring the delivery of triglycerides and energy storage in muscle, heart and adipose tissues. By participating in the lipoprotein-mediated distribution of lipids among tissues, APOE plays a critical role in plasma and tissues lipid homeostasis. APOE is also involved in two steps of reverse cholesterol transport, the HDLs-mediated transport of cholesterol from peripheral tissues to the liver, and thereby plays an important role in cholesterol homeostasis. First, it is functionally associated with ABCA1 in the biogenesis of HDLs in tissues. Second, it is enriched in circulating HDLs and mediates their uptake by hepatocytes. APOE also plays an important role in lipid transport in the central nervous system, regulating neuron survival and sprouting. The polypeptide is Apolipoprotein E (APOE) (Hydrochoerus hydrochaeris (Capybara)).